A 311-amino-acid chain; its full sequence is Porphobilinogen deaminase (311 aa).

Cys-241 carries the S-(dipyrrolylmethanemethyl)cysteine modification.

The protein belongs to the HMBS family. As to quaternary structure, monomer. Dipyrromethane is required as a cofactor.

The catalysed reaction is 4 porphobilinogen + H2O = hydroxymethylbilane + 4 NH4(+). It functions in the pathway porphyrin-containing compound metabolism; protoporphyrin-IX biosynthesis; coproporphyrinogen-III from 5-aminolevulinate: step 2/4. In terms of biological role, tetrapolymerization of the monopyrrole PBG into the hydroxymethylbilane pre-uroporphyrinogen in several discrete steps. In Campylobacter curvus (strain 525.92), this protein is Porphobilinogen deaminase.